The following is a 256-amino-acid chain: uncharacterized protein (256 aa).

Positions 16-83 constitute an S4 RNA-binding domain; the sequence is VRLQKILSRA…DSLVYLALNK (68 aa). Asp-121 functions as the Nucleophile in the catalytic mechanism.

This sequence belongs to the pseudouridine synthase RsuA family.

The catalysed reaction is a uridine in RNA = a pseudouridine in RNA. This is an uncharacterized protein from Mycobacterium leprae (strain TN).